Consider the following 220-residue polypeptide: GTP cyclohydrolase 1 (220 aa).

Zn(2+) contacts are provided by Cys-109, His-112, and Cys-180.

This sequence belongs to the GTP cyclohydrolase I family. In terms of assembly, homomer.

The enzyme catalyses GTP + H2O = 7,8-dihydroneopterin 3'-triphosphate + formate + H(+). It participates in cofactor biosynthesis; 7,8-dihydroneopterin triphosphate biosynthesis; 7,8-dihydroneopterin triphosphate from GTP: step 1/1. In Edwardsiella ictaluri (strain 93-146), this protein is GTP cyclohydrolase 1.